A 446-amino-acid polypeptide reads, in one-letter code: SWI/SNF chromatin-remodeling accessory subunit 1 (446 aa).

The segment at 1–53 (MQTQARPPVPQGPRFNHPATPQQVRRPINAPLPGQTAQIQGNRGPQPPKKKKR) is disordered. The SWIB/MDM2 domain occupies 220-297 (YQPMKFKLHP…PQRLHQLLQQ (78 aa)).

It belongs to the SMARCD family. As to quaternary structure, component of the multiprotein chromatin-remodeling complexes SWI/SNF: SWI/SNF-A (BAF), SWI/SNF-B (PBAF) and related complexes. The canonical complex contains a catalytic subunit swsn-4, core subunits swsn-1 and swsn-5, and accessory subunits swsn-3, swsn-6, phf-10, dpff-1, swsn-9 and either ham-3/swsn-2.1 or swsn-2.2. May interact with blmp-1. In terms of tissue distribution, broadly expressed in all cell types.

It localises to the nucleus. In terms of biological role, involved in transcriptional activation and repression of select genes by chromatin remodeling (alteration of DNA-nucleosome topology). Component of SWI/SNF chromatin remodeling complexes that carry out key enzymatic activities, changing chromatin structure by altering DNA-histone contacts within a nucleosome in an ATP-dependent manner. Required for the blmp-1-mediated transcriptional activation or repression of several hypodermal genes such as bed-3. Involved in regulating differentiation, migration and axon pathfinding of specific serotonergic neurons (HSNs). Probably regulates vulva development through the let-60/Ras pathway. May be involved in regulation of developmental processes in the embryo driven by the Wnt pathway. Involved in gonadogenesis. This chain is SWI/SNF chromatin-remodeling accessory subunit 1, found in Caenorhabditis elegans.